Here is a 342-residue protein sequence, read N- to C-terminus: Ribosomal RNA small subunit methyltransferase H (342 aa).

S-adenosyl-L-methionine-binding positions include 62-64 (GGH), D82, F108, D129, and Q136. Residues 280–319 (RHSKGQYPEDENLPMPPKRPRYFSKPKRVGPSKAEISHNP) form a disordered region. Residues 297–309 (KRPRYFSKPKRVG) are compositionally biased toward basic residues.

The protein belongs to the methyltransferase superfamily. RsmH family.

It localises to the cytoplasm. The enzyme catalyses cytidine(1402) in 16S rRNA + S-adenosyl-L-methionine = N(4)-methylcytidine(1402) in 16S rRNA + S-adenosyl-L-homocysteine + H(+). In terms of biological role, specifically methylates the N4 position of cytidine in position 1402 (C1402) of 16S rRNA. The sequence is that of Ribosomal RNA small subunit methyltransferase H from Psychrobacter cryohalolentis (strain ATCC BAA-1226 / DSM 17306 / VKM B-2378 / K5).